The chain runs to 178 residues: CASP-like protein 5B1 (178 aa).

The Cytoplasmic segment spans residues 1 to 37; the sequence is MDASNPIVHPIGDHHAVDLEEGPLIVTMKELPGMPGT. Residues 38–58 form a helical membrane-spanning segment; sequence IGGLALRVGQFLFAAAAIVIM. The Extracellular segment spans residues 59-69; that stretch reads VTGDEFTNYTA. N66 carries N-linked (GlcNAc...) asparagine glycosylation. The chain crosses the membrane as a helical span at residues 70 to 90; that stretch reads FCYLVAAMSLQFLWSFMLAIL. Over 91–104 the chain is Cytoplasmic; sequence DTYALLIKRGLRNS. Residues 105–125 traverse the membrane as a helical segment; sequence VLLSLFVVGDWVTATLSLAAA. Over 126-154 the chain is Extracellular; it reads CSTAGVTVLFDNDLNYCGQMHCHRYQLSA. A helical transmembrane segment spans residues 155 to 175; sequence AMAFLSWLLIGMSSLLTFWLW. Residues 176-178 lie on the Cytoplasmic side of the membrane; sequence ASE.

The protein belongs to the Casparian strip membrane proteins (CASP) family. In terms of assembly, homodimer and heterodimers.

Its subcellular location is the cell membrane. The chain is CASP-like protein 5B1 from Ginkgo biloba (Ginkgo).